The primary structure comprises 480 residues: Glutamate--tRNA ligase (480 aa).

Positions 9-19 match the 'HIGH' region motif; the sequence is PSPTGDPHVGT. The 'KMSKS' region signature appears at 253 to 257; sequence KISKR. ATP is bound at residue Lys256.

The protein belongs to the class-I aminoacyl-tRNA synthetase family. Glutamate--tRNA ligase type 1 subfamily. As to quaternary structure, monomer.

It is found in the cytoplasm. The catalysed reaction is tRNA(Glu) + L-glutamate + ATP = L-glutamyl-tRNA(Glu) + AMP + diphosphate. In terms of biological role, catalyzes the attachment of glutamate to tRNA(Glu) in a two-step reaction: glutamate is first activated by ATP to form Glu-AMP and then transferred to the acceptor end of tRNA(Glu). This Deinococcus geothermalis (strain DSM 11300 / CIP 105573 / AG-3a) protein is Glutamate--tRNA ligase.